We begin with the raw amino-acid sequence, 84 residues long: uncharacterized protein (84 aa).

A compositionally biased stretch (low complexity) spans 1–14 (MQKLNKSSSKGKNN). The interval 1-84 (MQKLNKSSSK…VDKGERKESE (84 aa)) is disordered. Over residues 28–40 (STYGFGPYGGGGF) the composition is skewed to gly residues. Composition is skewed to basic and acidic residues over residues 53 to 65 (DTKK…EEGT) and 73 to 84 (KLVDKGERKESE).

This is an uncharacterized protein from Schizosaccharomyces pombe (strain 972 / ATCC 24843) (Fission yeast).